A 538-amino-acid chain; its full sequence is Neutral protease B (538 aa).

Residues 1–28 (MRNLTKTSLLLAGLCTAAQMVFVTHASA) form the signal peptide. Residues 29-223 (EESIEYDHTY…VIESFNAIHE (195 aa)) constitute a propeptide, activation peptide. Asp-365 provides a ligand contact to Ca(2+). His-369 lines the Zn(2+) pocket. The active site involves Glu-370. Zn(2+) contacts are provided by His-373 and Glu-393. Ca(2+) is bound by residues Asp-404, Asp-406, Asp-407, Glu-409, Glu-412, Tyr-415, Thr-416, Ile-419, and Asp-422. The segment at 421–441 (GDSLRSLEDPSKQGNPDHYSN) is disordered. The active-site Proton donor is the His-453.

This sequence belongs to the peptidase M4 family. Requires Zn(2+) as cofactor.

Its subcellular location is the secreted. Its activity is regulated as follows. Protease activity can be inhibited in vitro by either a zinc specific chelator, 1,10-phenanthroline, or a metal chelator, EDTA. The enzyme is resistant to phenylmethylsulfonyl fluoride and iodoacetic acid. In terms of biological role, protease able to cleave casein in vitro. The chain is Neutral protease B from Bacillus subtilis (strain 168).